The following is a 148-amino-acid chain: Small ribosomal subunit protein bS6 (148 aa).

The interval His-96–Ala-148 is disordered.

The protein belongs to the bacterial ribosomal protein bS6 family.

Functionally, binds together with bS18 to 16S ribosomal RNA. This is Small ribosomal subunit protein bS6 from Brucella melitensis biotype 1 (strain ATCC 23456 / CCUG 17765 / NCTC 10094 / 16M).